The sequence spans 568 residues: MRGGAAGKRRTTVGFGGAPPPPPPSIEQQRHLFNSRDSDASFASSRPSSIGLGGRGASDDRSSMIRFINAFLSTHNFPISIRGNPVPSVKDISETLKFLLSALDYPCDSIKWDEDLVFFLKSQKCPFKITKSSLKAPNTPHNWPTVLAVVHWLAELARFHQHLVSNSTSVPEDNSMNFFAIQSFGHFIRGEDDKVNDLDSQFLGKLEAEKTSVAETISGCEKISGELEAKLESLRKGPSKKESLEKVKADLENDVNKFRTIVVEYTDRNPAMEKVVEEKAKELKAKEEERERISVENKELKKSVELQNFSAADVNRMRRELQAVERDVADAEVARDGWDQKAWELNSQIRNQFHQIQTLAIDCNQALRRLKLDIQFAVNERGETPAAVMGVDYKSVVKPALCSLCDGIKGSSAEKVEELVTLQHHKSEMASKIESKRSLLGSIQLQINDLEEKMKLVKKETQELSTKCDLEAKTLVESVKAEALNLEVVEKEAAEFVKASELRLQEAVKESEEEVQACAAQLFALIDSISKQKEYMDSKISEIKTGVADTASAVSEIYKANFKKNLGI.

A disordered region spans residues 1-59; that stretch reads MRGGAAGKRRTTVGFGGAPPPPPPSIEQQRHLFNSRDSDASFASSRPSSIGLGGRGASD. Positions 28-39 are enriched in basic and acidic residues; sequence QQRHLFNSRDSD. The span at 40–49 shows a compositional bias: low complexity; the sequence is ASFASSRPSS. 2 coiled-coil regions span residues 241-334 and 433-469; these read KESL…AEVA and IESKRSLLGSIQLQINDLEEKMKLVKKETQELSTKCD.

The protein belongs to the NDC80/HEC1 family. Component of the NDC80 complex, which consists of NDC80, NUF2, SPC24 and SPC25.

The protein localises to the chromosome. The protein resides in the centromere. In terms of biological role, acts as a component of the essential kinetochore-associated NDC80 complex, which is required for chromosome segregation and spindle checkpoint activity to ensure proper cell division. In Arabidopsis thaliana (Mouse-ear cress), this protein is Kinetochore protein NDC80 homolog.